Consider the following 138-residue polypeptide: Large ribosomal subunit protein bL17 (138 aa).

It belongs to the bacterial ribosomal protein bL17 family. In terms of assembly, part of the 50S ribosomal subunit. Contacts protein L32.

This chain is Large ribosomal subunit protein bL17, found in Nitrobacter winogradskyi (strain ATCC 25391 / DSM 10237 / CIP 104748 / NCIMB 11846 / Nb-255).